We begin with the raw amino-acid sequence, 237 residues long: Ribose-5-phosphate isomerase A (237 aa).

Substrate is bound by residues 28–31 (SGST), 83–86 (DGAD), and 97–100 (KGRG). Catalysis depends on E106, which acts as the Proton acceptor. K124 is a binding site for substrate.

This sequence belongs to the ribose 5-phosphate isomerase family. Homodimer.

The catalysed reaction is aldehydo-D-ribose 5-phosphate = D-ribulose 5-phosphate. Its pathway is carbohydrate degradation; pentose phosphate pathway; D-ribose 5-phosphate from D-ribulose 5-phosphate (non-oxidative stage): step 1/1. Catalyzes the reversible conversion of ribose-5-phosphate to ribulose 5-phosphate. The sequence is that of Ribose-5-phosphate isomerase A from Thermomicrobium roseum (strain ATCC 27502 / DSM 5159 / P-2).